Reading from the N-terminus, the 29-residue chain is Protein YldA (29 aa).

Residues 5 to 25 (FYILIGFLIMAAIIVMAVLYL) form a helical membrane-spanning segment.

The protein resides in the cell inner membrane. The protein is Protein YldA of Escherichia coli (strain K12).